A 759-amino-acid polypeptide reads, in one-letter code: Cullin-4A (759 aa).

Residues 1–40 (MADEGPRKGSVSALMGRTNGLTKPAALAGGPAKPGGTGGS) form a disordered region. Lys-8 is covalently cross-linked (Glycyl lysine isopeptide (Lys-Gly) (interchain with G-Cter in SUMO2)). The residue at position 10 (Ser-10) is a Phosphoserine. Over residues 20–31 (GLTKPAALAGGP) the composition is skewed to low complexity. Lys-33 participates in a covalent cross-link: Glycyl lysine isopeptide (Lys-Gly) (interchain with G-Cter in ubiquitin). A Cullin neddylation domain is found at 691 to 750 (DRQYQIDAAIVRIMKMRKTLGHNLLVSELYNQLKFPVKPGDLKKRIESLIDRDYMERDKD). A Glycyl lysine isopeptide (Lys-Gly) (interchain with G-Cter in NEDD8) cross-link involves residue Lys-705.

This sequence belongs to the cullin family. In terms of assembly, can self-associate. Component of multiple DCX (DDB1-CUL4-X-box) E3 ubiquitin-protein ligase complexes that seem to consist of DDB1, CUL4A or CUL4B, RBX1 and a variable substrate recognition component which seems to belong to a protein family described as DCAF (Ddb1- and Cul4-associated factor) or CDW (CUL4-DDB1-associated WD40-repeat) proteins. Component of the CSA complex (DCX(ERCC8) complex) containing ERCC8, RBX1, DDB1 and CUL4A; the CSA complex interacts with RNA polymerase II; upon UV irradiation it interacts with the COP9 signalosome and preferentially with the hyperphosphorylated form of RNA polymerase II. Component of the DCX(DET1-COP1) complex with the substrate recognition component DET1 and COP1. Component of the DCX(DDB2) complex with the substrate recognition component DDB2. Component of the DCX(DTL) complex with the putative substrate recognition component DTL. Component of DCX complexes part of the DesCEND (destruction via C-end degrons) pathway, which contain either TRPC4AP or DCAF12 as substrate-recognition component. Component of the DCX(AMBRA1) complex with the substrate recognition component AMBRA1. Interacts with DDB1, RBX1, RNF7, CDT1, TIP120A/CAND1, SKP2, CDKN1B, MDM2, TP53 and HOXA9. Interacts with DDB2; the interactions with DDB2 and CAND1 are mutually exclusive. Interacts with DCAF1, DTL, DDA1, DCAF6, DCAF4, DCAF16, DCAF17, DET1, WDTC1, DCAF5, DCAF11, WDR24A, COP1, PAFAH1B1, ERCC8, GRWD1, FBXW5, RBBP7, GNB2, WSB1, WSB2, NUP43, PWP1, FBXW8, ATG16L1, KATNB1, RBBP4, RBBP5, LRWD1 and DCAF8. May interact with WDR26, WDR51B, SNRNP40, WDR61, WDR76, WDR5. Interacts (when neddylated) with ARIH1; leading to activate the E3 ligase activity of ARIH1. The DDB1-CUL4A complex interacts with CRY1. Interacts (unneddylated form) with DCUN1D1, DCUN1D2, DCUN1D3, DCUN1D4 and DCUN1D5; these interactions promote the cullin neddylation. As to quaternary structure, (Microbial infection) Interacts with murine cytomegalovirus M48. Neddylated; required for activity of cullin-RING-based E3 ubiquitin-protein ligase complexes. Deneddylated via its interaction with the COP9 signalosome (CSN) complex. In terms of processing, (Microbial infection) Deneddylated by murine cytomegalovirus M48 leading to a S-phase-like environment that is required for efficient replication of the viral genome. As to expression, expressed in oocytes (at protein level). In the ovary, also expressed in cumulus cells. Expressed in testis, spleen and kidney.

Its pathway is protein modification; protein ubiquitination. Its function is as follows. Core component of multiple cullin-RING-based E3 ubiquitin-protein ligase complexes which mediate the ubiquitination of target proteins. As a scaffold protein may contribute to catalysis through positioning of the substrate and the ubiquitin-conjugating enzyme. The E3 ubiquitin-protein ligase activity of the complex is dependent on the neddylation of the cullin subunit and is inhibited by the association of the deneddylated cullin subunit with TIP120A/CAND1. The functional specificity of the E3 ubiquitin-protein ligase complex depends on the variable substrate recognition component. DCX(DET1-COP1) directs ubiquitination of JUN. DCX(DDB2) directs ubiquitination of XPC. DCX(DDB2) ubiquitinates histones H3-H4 and is required for efficient histone deposition during replication-coupled (H3.1) and replication-independent (H3.3) nucleosome assembly, probably by facilitating the transfer of H3 from ASF1A/ASF1B to other chaperones involved in histone deposition. DCX(DTL) plays a role in PCNA-dependent polyubiquitination of CDT1 and MDM2-dependent ubiquitination of p53/TP53 in response to radiation-induced DNA damage and during DNA replication. DCX(DTL) directs autoubiquitination of DTL. In association with DDB1 and SKP2 probably is involved in ubiquitination of CDKN1B/p27kip. Is involved in ubiquitination of HOXA9. The DDB1-CUL4A-DTL E3 ligase complex regulates the circadian clock function by mediating the ubiquitination and degradation of CRY1. The DCX(ERCC8) complex (also named CSA complex) plays a role in transcription-coupled repair (TCR). A number of DCX complexes (containing either TRPC4AP or DCAF12 as substrate-recognition component) are part of the DesCEND (destruction via C-end degrons) pathway, which recognizes a C-degron located at the extreme C terminus of target proteins, leading to their ubiquitination and degradation. With CUL4B, contributes to ribosome biogenesis. The DCX(AMBRA1) complex is a master regulator of the transition from G1 to S cell phase by mediating ubiquitination of phosphorylated cyclin-D (CCND1, CCND2 and CCND3). The DCX(AMBRA1) complex also acts as a regulator of Cul5-RING (CRL5) E3 ubiquitin-protein ligase complexes by mediating ubiquitination and degradation of Elongin-C (ELOC) component of CRL5 complexes. This is Cullin-4A from Mus musculus (Mouse).